The following is a 187-amino-acid chain: Hypoxanthine/guanine phosphoribosyltransferase (187 aa).

It belongs to the purine/pyrimidine phosphoribosyltransferase family. Archaeal HPRT subfamily. As to quaternary structure, homodimer.

The protein localises to the cytoplasm. It catalyses the reaction IMP + diphosphate = hypoxanthine + 5-phospho-alpha-D-ribose 1-diphosphate. It carries out the reaction GMP + diphosphate = guanine + 5-phospho-alpha-D-ribose 1-diphosphate. Its pathway is purine metabolism; IMP biosynthesis via salvage pathway; IMP from hypoxanthine: step 1/1. Its function is as follows. Catalyzes a salvage reaction resulting in the formation of IMP that is energically less costly than de novo synthesis. The chain is Hypoxanthine/guanine phosphoribosyltransferase from Methanococcus voltae (strain ATCC BAA-1334 / A3).